The sequence spans 275 residues: Glucosamine-6-phosphate deaminase 2 (275 aa).

The active-site Proton acceptor; for enolization step is Asp72. Positions 103-131 (NAHILDGNASDLQAECEDFERKIKEAGGI) form a coiled coil. The For ring-opening step role is filled by Asp141. His143 (proton acceptor; for ring-opening step) is an active-site residue. The active-site For ring-opening step is the Glu148.

This sequence belongs to the glucosamine/galactosamine-6-phosphate isomerase family. As to quaternary structure, homohexamer.

The protein localises to the cytoplasm. It carries out the reaction alpha-D-glucosamine 6-phosphate + H2O = beta-D-fructose 6-phosphate + NH4(+). Functionally, catalyzes the reversible conversion of alpha-D-glucosamine 6-phosphate (GlcN-6P) into beta-D-fructose 6-phosphate (Fru-6P) and ammonium ion, a regulatory reaction step in de novo uridine diphosphate-N-acetyl-alpha-D-glucosamine (UDP-GlcNAc) biosynthesis via hexosamine pathway. The polypeptide is Glucosamine-6-phosphate deaminase 2 (Xenopus tropicalis (Western clawed frog)).